A 597-amino-acid chain; its full sequence is MPVRQLPETIVNRIAAGEVVERPASVVKELVENAIDAGACRVDVFSDGGGRRKIVIADDGGGMTQADLALAVDRHATSKLDDEDLLAIRTLGFRGEALPSIGAVARLSLTTRHAAEPHAWTLSVEGGAKSPISPAALSQGTRVEVADLFFATPARLKFLKTDRTEAEAIREVVRRLAMARPDIAFTLAGEERAPVTWAAALPGAPGRLTRLGDILGADFRANAIEVGSEREGVAVEGFAASPSLTRANALGQYLFVNGRPVRDKLILGAVRAAYADYLPRDRHPVVALFVTLDSREVDANVHPAKTEVRFRNAGLVRALIVHALKEGLAREGRRTAANSAGAAISNFRPASMPPGNWDWRSSPSYPVGGGSSAAPSFGERPQAAFDVGGPSADIRPHEAAPELLDRPLGAARTQIHETYIVSQTRDGLIVVDQHAAHERIVYERLKASLDANGVQRQILLIPDIVEMDEATVERLVARAEELSKFGLVVESFGPGAVAVRETPSLLGKVNAASLLRDLAEHMAEWDEALPLERRLMHVAATMACHGSVRAGRVLKPEEMNALLREMEATPNSGQCNHGRPTYVELTLADIEKLFGRR.

Belongs to the DNA mismatch repair MutL/HexB family.

Functionally, this protein is involved in the repair of mismatches in DNA. It is required for dam-dependent methyl-directed DNA mismatch repair. May act as a 'molecular matchmaker', a protein that promotes the formation of a stable complex between two or more DNA-binding proteins in an ATP-dependent manner without itself being part of a final effector complex. The chain is DNA mismatch repair protein MutL from Rhodopseudomonas palustris (strain BisB5).